A 185-amino-acid chain; its full sequence is Peptidyl-tRNA hydrolase (185 aa).

TRNA is bound at residue Tyr-14. The active-site Proton acceptor is the His-19. Positions 64, 66, and 112 each coordinate tRNA.

This sequence belongs to the PTH family. As to quaternary structure, monomer.

The protein localises to the cytoplasm. The enzyme catalyses an N-acyl-L-alpha-aminoacyl-tRNA + H2O = an N-acyl-L-amino acid + a tRNA + H(+). Its function is as follows. Hydrolyzes ribosome-free peptidyl-tRNAs (with 1 or more amino acids incorporated), which drop off the ribosome during protein synthesis, or as a result of ribosome stalling. In terms of biological role, catalyzes the release of premature peptidyl moieties from peptidyl-tRNA molecules trapped in stalled 50S ribosomal subunits, and thus maintains levels of free tRNAs and 50S ribosomes. The chain is Peptidyl-tRNA hydrolase from Lactiplantibacillus plantarum (strain ATCC BAA-793 / NCIMB 8826 / WCFS1) (Lactobacillus plantarum).